Here is a 503-residue protein sequence, read N- to C-terminus: Cobyric acid synthase (503 aa).

Positions 251-450 (DLDIAVIRLP…IHGIFENAAF (200 aa)) constitute a GATase cobBQ-type domain. The active-site Nucleophile is the Cys331. The active site involves His442.

The protein belongs to the CobB/CobQ family. CobQ subfamily.

It functions in the pathway cofactor biosynthesis; adenosylcobalamin biosynthesis. Its function is as follows. Catalyzes amidations at positions B, D, E, and G on adenosylcobyrinic A,C-diamide. NH(2) groups are provided by glutamine, and one molecule of ATP is hydrogenolyzed for each amidation. The sequence is that of Cobyric acid synthase from Dehalococcoides mccartyi (strain CBDB1).